A 437-amino-acid polypeptide reads, in one-letter code: Serine--tRNA ligase (437 aa).

244–246 (TAE) is an L-serine binding site. Residue 275-277 (RSE) participates in ATP binding. Glu298 contributes to the L-serine binding site. 362-365 (EISS) is a binding site for ATP. L-serine is bound at residue Ser397.

This sequence belongs to the class-II aminoacyl-tRNA synthetase family. Type-1 seryl-tRNA synthetase subfamily. In terms of assembly, homodimer. The tRNA molecule binds across the dimer.

Its subcellular location is the cytoplasm. The catalysed reaction is tRNA(Ser) + L-serine + ATP = L-seryl-tRNA(Ser) + AMP + diphosphate + H(+). The enzyme catalyses tRNA(Sec) + L-serine + ATP = L-seryl-tRNA(Sec) + AMP + diphosphate + H(+). It participates in aminoacyl-tRNA biosynthesis; selenocysteinyl-tRNA(Sec) biosynthesis; L-seryl-tRNA(Sec) from L-serine and tRNA(Sec): step 1/1. In terms of biological role, catalyzes the attachment of serine to tRNA(Ser). Is also able to aminoacylate tRNA(Sec) with serine, to form the misacylated tRNA L-seryl-tRNA(Sec), which will be further converted into selenocysteinyl-tRNA(Sec). The protein is Serine--tRNA ligase of Nitrosomonas eutropha (strain DSM 101675 / C91 / Nm57).